A 206-amino-acid polypeptide reads, in one-letter code: Large ribosomal subunit protein uL4 (206 aa).

The interval 47 to 75 is disordered; that stretch reads GTQSAKTRAEVSGGGIKPWRQKGTGRARQ.

It belongs to the universal ribosomal protein uL4 family. As to quaternary structure, part of the 50S ribosomal subunit.

Its function is as follows. One of the primary rRNA binding proteins, this protein initially binds near the 5'-end of the 23S rRNA. It is important during the early stages of 50S assembly. It makes multiple contacts with different domains of the 23S rRNA in the assembled 50S subunit and ribosome. Forms part of the polypeptide exit tunnel. This Clostridium botulinum (strain 657 / Type Ba4) protein is Large ribosomal subunit protein uL4.